The chain runs to 266 residues: Glutamate racemase (266 aa).

Substrate-binding positions include 7 to 8 and 39 to 40; these read DS and YG. Cysteine 70 (proton donor/acceptor) is an active-site residue. 71–72 serves as a coordination point for substrate; the sequence is NT. The Proton donor/acceptor role is filled by cysteine 186. Residue 187–188 participates in substrate binding; the sequence is TH.

This sequence belongs to the aspartate/glutamate racemases family.

The enzyme catalyses L-glutamate = D-glutamate. The protein operates within cell wall biogenesis; peptidoglycan biosynthesis. Provides the (R)-glutamate required for cell wall biosynthesis. The chain is Glutamate racemase from Campylobacter curvus (strain 525.92).